Consider the following 242-residue polypeptide: Segregation and condensation protein A (242 aa).

The protein belongs to the ScpA family. Component of a cohesin-like complex composed of ScpA, ScpB and the Smc homodimer, in which ScpA and ScpB bind to the head domain of Smc. The presence of the three proteins is required for the association of the complex with DNA.

The protein localises to the cytoplasm. Participates in chromosomal partition during cell division. May act via the formation of a condensin-like complex containing Smc and ScpB that pull DNA away from mid-cell into both cell halves. This chain is Segregation and condensation protein A, found in Streptococcus mitis.